An 842-amino-acid polypeptide reads, in one-letter code: Cullin-8 (842 aa).

The segment at 1–50 is required for interaction with MMS1; that stretch reads MINESVSKREGFHESISRETSASNALGLYNKFNDERNPRYRTMIAELHEF. Polar residues predominate over residues 755–765; it reads LQSSNTGGERT. The disordered stretch occupies residues 755 to 775; the sequence is LQSSNTGGERTSSAHHEGSNS. Residue Lys791 forms a Glycyl lysine isopeptide (Lys-Gly) (interchain with G-Cter in NEDD8) linkage.

This sequence belongs to the cullin family. In terms of assembly, component of multiple cullin-RING ligases (CRLs) composed of 4 subunits: the RING protein HRT1, the cullin RTT101, a linker protein MMS1, and one of many alternative substrate receptors belonging to a protein family described as DCAF (DDB1- and CUL4-associated factor). Component of a RTT101(MMS1-MMS22) complex with the substrate receptor MMS22. This complex further interacts with RTT107 and CTF4 to form RTT101-MMS1-MMS22-RTT107 and RTT101-MMS1-MMS22-CTF4 complexes respectively. Component of a RTT101(MSS1-CRT10) complex with the substrate receptor CRT10. Component of a RTT101(MSS1-ESC2) complex with the potential substrate receptor ESC2. Component of a RTT101(MSS1-ORC5) complex with the potential substrate receptor ORC5. Interacts (via C-ter) with HRT1; required for ubiquitin-ligase activity. Interacts (via N-ter) with MMS1. Post-translationally, neddylated. HRT1-binding is necessary for RUB1/NEDD8 modification of RTT101. The modification enhances ubiquitin-ligase activity.

The protein resides in the cytoplasm. It localises to the nucleus. It participates in protein modification; protein ubiquitination. Its function is as follows. Core component of multiple cullin-RING-based E3 ubiquitin-protein ligase complexes (CRLs), which mediate the ubiquitination of target proteins. As a scaffold protein may contribute to catalysis through positioning of the substrate and the ubiquitin-conjugating enzyme. The CRL associates with CDC34 as the E2 ubiquitin-conjugating enzyme. The functional specificity of the CRL depends on the type of the associated substrate receptor protein. RTT101(MMS1-MMS22) promotes fork progression through damaged DNA or natural pause sites by stabilizing replication proteins like the replication fork-pausing complex (FPC) and leading-strand polymerase at stalled replication forks. RTT101(MMS1-MMS22) ubiquitinates the acetylated histones H3K56ac-H4 at lysine residues H3K121, H3K122 and H3K125. Ubiquitination is required for efficient histone deposition during replication-coupled nucleosome assembly, probably by facilitating the transfer of H3-H4 from ASF1 to other chaperones involved in histone deposition. RTT101(MMS1-CRT10) may regulate nucleotide synthesis through transcriptional regulation of ribonucleotide reductase. RTT101(MMS1) is also involved in the non-functional rRNA decay (NRD) of 25S rRNA through the selective, ubiquitination-dependent degradation of nonfunctional ribosomal particles. Ubiquitinates the FACT (facilitates chromatin transcription) complex subunit SPT16 in an MMS1-independent manner. Involved in regulation of Ty1 transposition and protects the genome from Ty1 integration upstream of tRNA genes. The sequence is that of Cullin-8 (RTT101) from Saccharomyces cerevisiae (strain ATCC 204508 / S288c) (Baker's yeast).